Reading from the N-terminus, the 260-residue chain is 3-oxoadipate CoA-transferase subunit B (260 aa).

Glu-51 is a catalytic residue.

This sequence belongs to the 3-oxoacid CoA-transferase subunit B family. Heterotetramer composed of 2 A and 2 B subunits.

It carries out the reaction 3-oxoadipate + succinyl-CoA = 3-oxoadipyl-CoA + succinate. It participates in aromatic compound metabolism; beta-ketoadipate pathway; acetyl-CoA and succinyl-CoA from 3-oxoadipate: step 1/2. The polypeptide is 3-oxoadipate CoA-transferase subunit B (catJ) (Pseudomonas knackmussii (strain DSM 6978 / CCUG 54928 / LMG 23759 / B13)).